We begin with the raw amino-acid sequence, 362 residues long: Mannose-1-phosphate guanyltransferase (362 aa).

The protein belongs to the transferase hexapeptide repeat family.

Its subcellular location is the cytoplasm. It catalyses the reaction alpha-D-mannose 1-phosphate + GTP + H(+) = GDP-alpha-D-mannose + diphosphate. The protein operates within nucleotide-sugar biosynthesis; GDP-alpha-D-mannose biosynthesis; GDP-alpha-D-mannose from alpha-D-mannose 1-phosphate (GTP route): step 1/1. In terms of biological role, involved in cell wall synthesis where it is required for glycosylation. Involved in cell cycle progression through cell-size checkpoint. The sequence is that of Mannose-1-phosphate guanyltransferase (MPG1) from Candida albicans (strain SC5314 / ATCC MYA-2876) (Yeast).